We begin with the raw amino-acid sequence, 262 residues long: Acyl-coenzyme A diphosphatase FITM2 (262 aa).

At 1–23 (MEHLERCAWVLRGTLVRSAVRKY) the chain is on the cytoplasmic side. Residues 24–44 (LPWALAASMLAGSLLKELSPL) form a helical membrane-spanning segment. The Lumenal portion of the chain corresponds to 45 to 57 (PESYLSNKRNVLN). A helical transmembrane segment spans residues 58 to 78 (VYFVKVAWAWTFCLLLPFIAL). At 79–93 (TNYHLTGKAGLVLRR) the chain is on the cytoplasmic side. Residues 94–114 (LSTLLVGTAIWYVCTAIFSNI) form a helical membrane-spanning segment. The Lumenal portion of the chain corresponds to 115–145 (EHYTGSCYQSPALEGERKEHQSKQQCHGEGG). Residues 146-166 (FWHGFDISGHSFLLTFCALMI) form a helical membrane-spanning segment. Histidine 155 is an active-site residue. The Cytoplasmic segment spans residues 167-190 (VEEMAVLHEVKTDRNHCLHAAITT). Residues 191–211 (LVVALGFLTFIWVWMFLCTAV) traverse the membrane as a helical segment. Topologically, residues 212 to 218 (YFHNLSQ) are lumenal. Histidine 214 is a catalytic residue. Residues 219-239 (KVFGTLFGLLGWYGTYGCWYL) form a helical membrane-spanning segment. Topologically, residues 240-262 (KSFSPGLPPQSSSLNLKQDTYKK) are cytoplasmic.

This sequence belongs to the FIT family. FIT2 subfamily.

It localises to the endoplasmic reticulum membrane. It carries out the reaction an acyl-CoA + H2O = an acyl-4'-phosphopantetheine + adenosine 3',5'-bisphosphate + 2 H(+). It catalyses the reaction (9Z)-octadecenoyl-CoA + H2O = S-(9Z-octadecenoyl)-4'-phosphopantetheine + adenosine 3',5'-bisphosphate + 2 H(+). The enzyme catalyses (5Z,8Z,11Z,14Z)-eicosatetraenoyl-CoA + H2O = S-(5Z,8Z,11Z,14Z-eicosatetraenoyl)-4'-phosphopantetheine + adenosine 3',5'-bisphosphate + 2 H(+). The catalysed reaction is hexadecanoyl-CoA + H2O = S-hexadecanoyl-4'-phosphopantetheine + adenosine 3',5'-bisphosphate + 2 H(+). Fatty acyl-coenzyme A (CoA) diphosphatase that hydrolyzes fatty acyl-CoA to yield acyl-4'-phosphopantetheine and adenosine 3',5'-bisphosphate. Preferentially hydrolyzes unsaturated long-chain acyl-CoA substrates such as oleoyl-CoA/(9Z)-octadecenoyl-CoA and arachidonoyl-CoA/(5Z,8Z,11Z,14Z)-eicosatetraenoyl-CoA in the endoplasmic reticulum (ER) lumen. This catalytic activity is required for maintaining ER structure and for lipid droplets (LDs) biogenesis, which are lipid storage organelles involved in maintaining lipid and energy homeostasis. Directly binds to diacylglycerol (DAGs) and triacylglycerol, which is also important for LD biogenesis. May support directional budding of nacent LDs from the ER into the cytosol by reducing DAG levels at sites of LD formation. Plays a role in the regulation of cell morphology and cytoskeletal organization. This is Acyl-coenzyme A diphosphatase FITM2 from Bos taurus (Bovine).